The sequence spans 257 residues: Pyridoxine 5'-phosphate synthase (257 aa).

N6 serves as a coordination point for 3-amino-2-oxopropyl phosphate. 8-9 (DH) serves as a coordination point for 1-deoxy-D-xylulose 5-phosphate. Residue R17 coordinates 3-amino-2-oxopropyl phosphate. H41 (proton acceptor) is an active-site residue. 1-deoxy-D-xylulose 5-phosphate is bound by residues R43 and H48. Catalysis depends on E68, which acts as the Proton acceptor. 1-deoxy-D-xylulose 5-phosphate is bound at residue T98. The active-site Proton donor is the H210. Residues G211 and 232–233 (GQ) contribute to the 3-amino-2-oxopropyl phosphate site.

It belongs to the PNP synthase family. Homooctamer; tetramer of dimers.

The protein resides in the cytoplasm. The enzyme catalyses 3-amino-2-oxopropyl phosphate + 1-deoxy-D-xylulose 5-phosphate = pyridoxine 5'-phosphate + phosphate + 2 H2O + H(+). It functions in the pathway cofactor biosynthesis; pyridoxine 5'-phosphate biosynthesis; pyridoxine 5'-phosphate from D-erythrose 4-phosphate: step 5/5. Functionally, catalyzes the complicated ring closure reaction between the two acyclic compounds 1-deoxy-D-xylulose-5-phosphate (DXP) and 3-amino-2-oxopropyl phosphate (1-amino-acetone-3-phosphate or AAP) to form pyridoxine 5'-phosphate (PNP) and inorganic phosphate. This Campylobacter jejuni (strain RM1221) protein is Pyridoxine 5'-phosphate synthase.